The sequence spans 465 residues: Uronate isomerase (465 aa).

This sequence belongs to the metallo-dependent hydrolases superfamily. Uronate isomerase family.

It carries out the reaction D-glucuronate = D-fructuronate. It catalyses the reaction aldehydo-D-galacturonate = keto-D-tagaturonate. Its pathway is carbohydrate metabolism; pentose and glucuronate interconversion. The protein is Uronate isomerase of Streptococcus equi subsp. zooepidemicus (strain H70).